Here is a 770-residue protein sequence, read N- to C-terminus: Cyclopiane-type diterpene synthase (770 aa).

Residues 5-335 are terpene cyclase; it reads ITDEYAVGID…VPRYCKVDRN (331 aa). Mg(2+) is bound by residues aspartate 97 and aspartate 101. Substrate is bound by residues aspartate 97, aspartate 101, 190–193, asparagine 234, 238–242, and 328–329; these read RIVD, SWDKE, and RY. Positions 97–101 match the DDXXD 1 motif; the sequence is DDETD. Residues 234–242 carry the NSE/DTE motif; the sequence is NDLFSWDKE. The prenyltransferase stretch occupies residues 336–720; sequence PYKDHLEKYG…WALRLLIMKL (385 aa). Positions 371–397 are disordered; it reads NQLKEPSSSTYKTHFSPLEPNPGPEQT. The segment covering 374–383 has biased composition (polar residues); that stretch reads KEPSSSTYKT. Residues lysine 423, arginine 426, and histidine 455 each coordinate isopentenyl diphosphate. 2 residues coordinate Mg(2+): aspartate 462 and aspartate 466. The DDXXD 2 motif lies at 462–466; the sequence is DDIQD. Arginine 471 serves as a coordination point for dimethylallyl diphosphate. Arginine 472 lines the isopentenyl diphosphate pocket. Dimethylallyl diphosphate contacts are provided by lysine 548, threonine 549, glutamine 584, asparagine 591, lysine 620, and lysine 630.

The protein in the N-terminal section; belongs to the terpene synthase family. This sequence in the C-terminal section; belongs to the FPP/GGPP synthase family. As to quaternary structure, hexamer. It depends on Mg(2+) as a cofactor.

It catalyses the reaction isopentenyl diphosphate + (2E,6E)-farnesyl diphosphate = (2E,6E,10E)-geranylgeranyl diphosphate + diphosphate. It carries out the reaction (2E,6E,10E)-geranylgeranyl diphosphate + H2O = (+)-penichrysol + diphosphate. It participates in secondary metabolite biosynthesis; terpenoid biosynthesis. Bifunctional terpene synthase converts dimethylallyl diphosphate (DMAPP) and isopentenyl diphosphate (IPP) into a cyclopiane-type diterpene. The C-terminal prenyltransferase (PT) domain of PcCS catalyzes formation of geranylgeranyl pyrophosphate (GGPP), whereas the N-terminal terpene cyclase (TC) domain catalyzes the cyclization of GGPP to the cyclopiane-type diterpene penichrysol. In Penicillium chrysogenum (Penicillium notatum), this protein is Cyclopiane-type diterpene synthase.